The sequence spans 123 residues: Con-ikot-ikot (123 aa).

An N-terminal signal peptide occupies residues 1 to 18; it reads MAMNMSMTLCMFVMVVVA. Positions 19 to 37 are excised as a propeptide; that stretch reads ATVIDSTQLQEPDLSRMRR. 5 disulfide bridges follow: cysteine 49–cysteine 80, cysteine 50–cysteine 89, cysteine 57–cysteine 72, cysteine 90–cysteine 118, and cysteine 96–cysteine 113.

Homodimer; disulfide-linked. In terms of tissue distribution, expressed by the venom duct.

It localises to the secreted. In terms of biological role, potently and selectively blocks the desensitization of ionotropic glutamate AMPA receptors (GRIA1, GRIA2, GRIA3 and GRIA4). Binds to a different site than does the drug cyclothiazide. The toxin acts like a straitjacket on the 'gating ring' of the ligand-binding domain (LBD) of the receptor. It does so by restraining the domains via both intra- and interdimer cross-links such that agonist-induced closure of the LBD 'clamshells' is transduced into an irislike expansion of the gating ring. Compared to other desensitization blockers, it is a poor stabilizer of the open channel because toxin-bound AMPA receptors undergo frequent brief closures. In vitro, application of the toxin to hippocampal slices causes a large and rapid increase in resting AMPA receptor-mediated current leading to neuronal death. This chain is Con-ikot-ikot, found in Conus striatus (Striated cone).